A 117-amino-acid polypeptide reads, in one-letter code: DNA-directed RNA polymerase subunit omega (117 aa).

Belongs to the RNA polymerase subunit omega family. The RNAP catalytic core consists of 2 alpha, 1 beta, 1 beta' and 1 omega subunit. When a sigma factor is associated with the core the holoenzyme is formed, which can initiate transcription.

It carries out the reaction RNA(n) + a ribonucleoside 5'-triphosphate = RNA(n+1) + diphosphate. Its function is as follows. Promotes RNA polymerase assembly. Latches the N- and C-terminal regions of the beta' subunit thereby facilitating its interaction with the beta and alpha subunits. The polypeptide is DNA-directed RNA polymerase subunit omega (Ruegeria pomeroyi (strain ATCC 700808 / DSM 15171 / DSS-3) (Silicibacter pomeroyi)).